We begin with the raw amino-acid sequence, 103 residues long: N(4)-acetylcytidine amidohydrolase (103 aa).

In terms of domain architecture, ASCH spans 6–101; it reads ITFFQRFQDD…QIQFYVIEFK (96 aa). Lysine 21 serves as the catalytic Proton acceptor. Threonine 24 acts as the Nucleophile in catalysis. Glutamate 74 functions as the Proton donor in the catalytic mechanism.

The protein belongs to the N(4)-acetylcytidine amidohydrolase family.

The catalysed reaction is N(4)-acetylcytidine + H2O = cytidine + acetate + H(+). It carries out the reaction N(4)-acetyl-2'-deoxycytidine + H2O = 2'-deoxycytidine + acetate + H(+). It catalyses the reaction N(4)-acetylcytosine + H2O = cytosine + acetate + H(+). Its function is as follows. Catalyzes the hydrolysis of N(4)-acetylcytidine (ac4C). In Escherichia coli (strain SMS-3-5 / SECEC), this protein is N(4)-acetylcytidine amidohydrolase (yqfB).